A 136-amino-acid polypeptide reads, in one-letter code: Secreted RxLR effector protein 10 (136 aa).

The first 22 residues, 1–22 (MRVLNFVLTTTVVLLTSSEGIA), serve as a signal peptide directing secretion. Residues 42–56 (RSLRATENPGSDESR) carry the RxLR-dEER motif. The interval 42 to 78 (RSLRATENPGSDESRLNEKDTGFDPDGSSSKEDEDIG) is disordered. Basic and acidic residues predominate over residues 53–63 (DESRLNEKDTG).

Belongs to the RxLR effector family.

The protein localises to the secreted. It localises to the host cytoplasm. It is found in the host nucleus. Functionally, effector that acts as a broad suppressor of cell death to interrupt plant immunity. Inhibits cell death induced by cell death-inducing proteins, including the PAMP elicitor INF1 from P.infestans. The sequence is that of Secreted RxLR effector protein 10 from Plasmopara viticola (Downy mildew of grapevine).